A 370-amino-acid polypeptide reads, in one-letter code: Cobalt-precorrin-5B C(1)-methyltransferase (370 aa).

The protein belongs to the CbiD family.

The enzyme catalyses Co-precorrin-5B + S-adenosyl-L-methionine = Co-precorrin-6A + S-adenosyl-L-homocysteine. The protein operates within cofactor biosynthesis; adenosylcobalamin biosynthesis; cob(II)yrinate a,c-diamide from sirohydrochlorin (anaerobic route): step 6/10. Catalyzes the methylation of C-1 in cobalt-precorrin-5B to form cobalt-precorrin-6A. This is Cobalt-precorrin-5B C(1)-methyltransferase from Pseudomonas syringae pv. tomato (strain ATCC BAA-871 / DC3000).